The chain runs to 221 residues: Keratin-associated protein 10-3 (221 aa).

18 repeat units span residues 26–30 (CCEPP), 31–35 (CCATS), 36–40 (CCAPA), 57–61 (CCQAA), 79–83 (CCQQS), 89–93 (CCTSS), 99–103 (CCVPV), 104–108 (CCKPV), 109–113 (CCVPV), 114–118 (CCKPV), 119–123 (CCKPI), 124–128 (CCVPV), 136–140 (CCQQS), 146–150 (CCTTS), 151–155 (CCRPS), 177–181 (CCAPA), 188–192 (CCRPA), and 210–214 (CCGLS). The tract at residues 26–214 (CCEPPCCATS…RLSSACCGLS (189 aa)) is 18 X 5 AA repeats of C-C-X(3).

The protein belongs to the KRTAP type 10 family. As to quaternary structure, interacts with hair keratins. Restricted to a narrow region of the hair fiber cuticle, lying approximately 20 cell layers above the apex of the dermal papilla of the hair root; not detected in any other tissues.

In the hair cortex, hair keratin intermediate filaments are embedded in an interfilamentous matrix, consisting of hair keratin-associated proteins (KRTAP), which are essential for the formation of a rigid and resistant hair shaft through their extensive disulfide bond cross-linking with abundant cysteine residues of hair keratins. The matrix proteins include the high-sulfur and high-glycine-tyrosine keratins. The sequence is that of Keratin-associated protein 10-3 (KRTAP10-3) from Homo sapiens (Human).